Here is a 378-residue protein sequence, read N- to C-terminus: Transmembrane 6 superfamily member 2 (378 aa).

Transmembrane regions (helical) follow at residues 10-30 (TVAM…VSAF), 34-54 (LFVV…VYSL), 63-83 (PLYA…VIAL), 110-130 (IFIC…MAGA), 140-160 (LGLY…PGNI), 170-190 (PTFF…VRIF), 219-239 (LALI…GLVV), 269-289 (MLMY…ALAF), 291-311 (GCSW…QAQF), and 332-352 (TWAT…LLAF). 2 EXPERA domains span residues 61 to 186 (YDPL…CWAG) and 217 to 351 (ADLA…HLLA).

It belongs to the TM6SF family. As to expression, highly expressed in the liver at both the mRNA and protein levels.

Its subcellular location is the endoplasmic reticulum membrane. The protein resides in the endoplasmic reticulum-Golgi intermediate compartment membrane. In terms of biological role, regulator of liver fat metabolism influencing triglyceride secretion and hepatic lipid droplet content. May function as sterol isomerase. The chain is Transmembrane 6 superfamily member 2 (Tm6sf2) from Mus musculus (Mouse).